The sequence spans 123 residues: uncharacterized protein (123 aa).

2 helical membrane passes run 55-77 (LLIHSYISFMLTLCFFLSLSTIL) and 92-114 (FFINIIICYKHKSSAYCVYTIVY).

The protein resides in the cell membrane. This is an uncharacterized protein from Pasteurella multocida (strain Pm70).